The primary structure comprises 328 residues: ATP-dependent 6-phosphofructokinase (328 aa).

Residue glycine 11 coordinates ATP. 21-25 (RAAVR) serves as a coordination point for ADP. ATP is bound by residues 72–73 (RS) and 102–105 (GNGT). Asparagine 103 contacts Mg(2+). 126-128 (TID) serves as a coordination point for substrate. The active-site Proton acceptor is aspartate 128. ADP is bound at residue arginine 155. Substrate-binding positions include arginine 163 and 170-172 (MGR). Residues 186–188 (GAE) and 214–216 (KAS) contribute to the ADP site. Substrate is bound by residues glutamate 223, arginine 247, and 253–256 (HVQR).

The protein belongs to the phosphofructokinase type A (PFKA) family. ATP-dependent PFK group I subfamily. Prokaryotic clade 'B1' sub-subfamily. Homotetramer. The cofactor is Mg(2+).

Its subcellular location is the cytoplasm. It carries out the reaction beta-D-fructose 6-phosphate + ATP = beta-D-fructose 1,6-bisphosphate + ADP + H(+). It participates in carbohydrate degradation; glycolysis; D-glyceraldehyde 3-phosphate and glycerone phosphate from D-glucose: step 3/4. Its activity is regulated as follows. Allosterically activated by ADP and other diphosphonucleosides, and allosterically inhibited by phosphoenolpyruvate. Catalyzes the phosphorylation of D-fructose 6-phosphate to fructose 1,6-bisphosphate by ATP, the first committing step of glycolysis. The polypeptide is ATP-dependent 6-phosphofructokinase (Cytophaga hutchinsonii (strain ATCC 33406 / DSM 1761 / CIP 103989 / NBRC 15051 / NCIMB 9469 / D465)).